The chain runs to 465 residues: Intraflagellar transport protein 54 (465 aa).

Disordered stretches follow at residues 119-301 (VRSN…GFTM) and 347-366 (LHGDGSKKPTGLSTQRDKKP). The stretch at 144 to 207 (LEALAREKAE…KQKQQQQQQQ (64 aa)) forms a coiled coil. Residues 146-198 (ALAREKAEKERQRREQEQQERERKERERQEKEREEREKHELESRERAEAEQWK) show a composition bias toward basic and acidic residues. A compositionally biased stretch (low complexity) spans 199–220 (QKQQQQQQQQQSAISPQKSPPK). Positions 222–242 (RFADDDKTRVEEHQPVIERPH) are enriched in basic and acidic residues.

This sequence belongs to the TRAF3IP1 family.

Its subcellular location is the cell projection. It is found in the cilium. The protein localises to the flagellum. The protein resides in the cytoplasm. It localises to the cytoskeleton. Its subcellular location is the flagellum axoneme. It is found in the flagellum basal body. Functionally, component of the intraflagellar transport complex B (IFT-B) involved in flagellar assembly. The sequence is that of Intraflagellar transport protein 54 from Giardia intestinalis (strain ATCC 50803 / WB clone C6) (Giardia lamblia).